A 3620-amino-acid polypeptide reads, in one-letter code: Cubilin (3620 aa).

The signal sequence occupies residues Met1 to Gly20. The propeptide at Glu21 to Arg32 is removed in mature form. An interaction with AMN region spans residues Pro39–Gly46. The N-linked (GlcNAc...) asparagine glycan is linked to Asn102. Positions Asp129–Ser165 constitute an EGF-like 1 domain. Cystine bridges form between Cys133/Cys144, Cys138/Cys153, Cys155/Cys164, Cys171/Cys187, Cys181/Cys196, and Cys198/Cys207. One can recognise an EGF-like 2; calcium-binding domain in the interval Asp167–Ala208. Residue Asn253 is glycosylated (N-linked (GlcNAc...) asparagine). One can recognise an EGF-like 3; calcium-binding domain in the interval Asp260–Gln301. Intrachain disulfides connect Cys264-Cys277, Cys271-Cys286, Cys289-Cys300, Cys306-Cys321, Cys313-Cys330, Cys333-Cys344, Cys350-Cys363, Cys357-Cys373, Cys396-Cys406, Cys401-Cys415, Cys417-Cys426, Cys433-Cys444, Cys438-Cys453, Cys455-Cys464, Cys471-Cys497, Cys524-Cys546, Cys587-Cys613, Cys640-Cys662, and Cys705-Cys730. In terms of domain architecture, EGF-like 4; calcium-binding spans Asp302 to Thr345. 2 consecutive EGF-like domains span residues Val346–Asn382 and Leu392–Thr427. N-linked (GlcNAc...) asparagine glycosylation is present at Asn425. An EGF-like 7; calcium-binding domain is found at Asn429–Gln465. CUB domains are found at residues Cys471–Gln583, Cys587–Ser699, Cys705–Ala812, Cys813–Ala924, Cys928–Thr1038, Cys1044–Ser1158, Cys1162–Thr1274, Cys1275–His1386, Cys1388–Val1503, Cys1507–Val1616, Cys1617–Ser1731, Cys1735–Ile1847, and Gly1849–Val1960. Residues Asn708 and Asn745 are each glycosylated (N-linked (GlcNAc...) asparagine). The cysteines at positions 757 and 775 are disulfide-linked. A glycan (N-linked (GlcNAc...) asparagine) is linked at Asn777. A disulfide bridge links Cys813 with Cys838. An N-linked (GlcNAc...) asparagine glycan is attached at Asn853. Intrachain disulfides connect Cys865–Cys887 and Cys928–Cys954. A glycan (N-linked (GlcNAc...) asparagine) is linked at Asn953. Glu976 contacts Ca(2+). Asn980 carries N-linked (GlcNAc...) asparagine glycosylation. Cys981 and Cys1001 are disulfide-bonded. Ca(2+)-binding residues include Asp984, Asp1023, Asp1025, and Leu1026. A disulfide bridge links Cys1044 with Cys1070. Residues Glu1092, Asp1102, and Asp1143 each contribute to the Ca(2+) site. Cys1099 and Cys1121 form a disulfide bridge. A disulfide bridge links Cys1162 with Cys1188. Asn1165 carries N-linked (GlcNAc...) asparagine glycosylation. Glu1210 is a binding site for Ca(2+). The N-linked (GlcNAc...) asparagine glycan is linked to Asn1214. A disulfide bridge connects residues Cys1215 and Cys1237. 3 residues coordinate Ca(2+): Asp1218, Asp1259, and Gln1262. A disulfide bridge connects residues Cys1275 and Cys1303. Residues Asn1304 and Asn1316 are each glycosylated (N-linked (GlcNAc...) asparagine). Glu1325 is a Ca(2+) binding site. Asn1329 is a glycosylation site (N-linked (GlcNAc...) asparagine). Cys1330 and Cys1348 form a disulfide bridge. Ca(2+) is bound by residues Asp1333, Asp1370, and Val1372. 2 cysteine pairs are disulfide-bonded: Cys1388/Cys1414 and Cys1441/Cys1463. The N-linked (GlcNAc...) asparagine glycan is linked to Asn1497. Residues Cys1507 and Cys1533 are joined by a disulfide bond. N-linked (GlcNAc...) asparagine glycosylation is present at Asn1548. 5 disulfide bridges follow: Cys1560–Cys1578, Cys1617–Cys1644, Cys1672–Cys1694, Cys1735–Cys1761, and Cys1788–Cys1809. N-linked (GlcNAc...) asparagine glycosylation occurs at Asn1643. N-linked (GlcNAc...) asparagine glycans are attached at residues Asn1799, Asn1816, and Asn1882. Cys1902 and Cys1924 are oxidised to a cystine. Residue Asn1961 is glycosylated (N-linked (GlcNAc...) asparagine). Intrachain disulfides connect Cys1975–Cys2003 and Cys2029–Cys2051. CUB domains follow at residues Cys1975–Ser2088, Cys2089–Lys2210, Cys2214–Ala2331, Cys2333–Ser2445, Cys2449–Ser2562, Cys2567–Thr2684, Cys2686–Gln2798, Cys2802–Arg2916, Cys2917–Thr3032, Cys3034–Thr3147, Cys3154–Val3271, Cys3275–Cys3392, Cys3392–Ser3504, and Cys3508–Ser3620. N-linked (GlcNAc...) asparagine glycosylation is found at Asn2082 and Asn2114. Disulfide bonds link Cys2089–Cys2115, Cys2214–Cys2244, and Cys2272–Cys2294. Asn2317 carries an N-linked (GlcNAc...) asparagine glycan. The cysteines at positions 2333 and 2360 are disulfide-linked. Residues Asn2383 and Asn2397 are each glycosylated (N-linked (GlcNAc...) asparagine). Cystine bridges form between Cys2387/Cys2408, Cys2449/Cys2475, and Cys2502/Cys2524. Asn2528, Asn2578, Asn2589, and Asn2607 each carry an N-linked (GlcNAc...) asparagine glycan. The cysteines at positions 2567 and 2596 are disulfide-linked. Cystine bridges form between Cys2625–Cys2646, Cys2686–Cys2712, Cys2739–Cys2761, Cys2802–Cys2828, Cys2857–Cys2880, Cys2917–Cys2943, and Cys2974–Cys2996. N-linked (GlcNAc...) asparagine glycosylation is present at Asn2810. Asn2920, Asn2942, and Asn2986 each carry an N-linked (GlcNAc...) asparagine glycan. Thr3005 carries the phosphothreonine modification. Intrachain disulfides connect Cys3034–Cys3061 and Cys3088–Cys3110. N-linked (GlcNAc...) asparagine glycosylation is found at Asn3039, Asn3100, and Asn3122. Cystine bridges form between Cys3154/Cys3182 and Cys3212/Cys3234. Residues Asn3265, Asn3280, and Asn3292 are each glycosylated (N-linked (GlcNAc...) asparagine). Disulfide bonds link Cys3275/Cys3303 and Cys3329/Cys3351. The N-linked (GlcNAc...) asparagine glycan is linked to Asn3354. A disulfide bond links Cys3392 and Cys3418. Residues Asn3427, Asn3454, and Asn3530 are each glycosylated (N-linked (GlcNAc...) asparagine). 3 disulfide bridges follow: Cys3445/Cys3467, Cys3508/Cys3534, and Cys3561/Cys3583.

As to quaternary structure, interacts with AMN. Component of the cubam complex composed of one CUBN trimer and one AMN chain. The cubam complex can dimerize. Interacts with LRP2 in a dual-receptor complex in a calcium-dependent manner. Found in a complex with PID1/PCLI1, LRP1 and CUBNI. Interacts with LRP1 and PID1/PCLI1. The precursor is cleaved by a trans-Golgi proteinase furin, removing a propeptide. In terms of processing, N-glycosylated. As to expression, detected in kidney cortex (at protein level). Detected in kidney, duodenum and jejunum.

It is found in the apical cell membrane. It localises to the cell membrane. The protein resides in the membrane. The protein localises to the coated pit. Its subcellular location is the endosome. It is found in the lysosome membrane. Its function is as follows. Endocytic receptor which plays a role in lipoprotein, vitamin and iron metabolism by facilitating their uptake. Acts together with LRP2 to mediate endocytosis of high-density lipoproteins, GC, hemoglobin, ALB, TF and SCGB1A1. Acts together with AMN to mediate endocytosis of the CBLIF-cobalamin complex. Binds to ALB, MB, Kappa and lambda-light chains, TF, hemoglobin, GC, SCGB1A1, APOA1, high density lipoprotein, and the CBLIF-cobalamin complex. Ligand binding requires calcium. Serves as important transporter in several absorptive epithelia, including intestine, renal proximal tubules and embryonic yolk sac. May play an important role in the development of the peri-implantation embryo through internalization of APOA1 and cholesterol. Binds to LGALS3 at the maternal-fetal interface. The chain is Cubilin (CUBN) from Canis lupus familiaris (Dog).